Here is a 523-residue protein sequence, read N- to C-terminus: Ubiquitin carboxyl-terminal hydrolase 22-A (523 aa).

A UBP-type zinc finger spans residues 4–121 (AGCSHVNSFK…KEEQRKAWKL (118 aa)). Residues Cys-6, His-8, Cys-46, Cys-49, Cys-59, Cys-62, Cys-67, His-72, His-76, His-82, Cys-95, and Cys-98 each contribute to the Zn(2+) site. In terms of domain architecture, USP spans 174–518 (RGLINLGNTC…EGYLLFYHKQ (345 aa)). Catalysis depends on Cys-183, which acts as the Nucleophile. Residue His-477 is the Proton acceptor of the active site.

Belongs to the peptidase C19 family. UBP8 subfamily. Component of some SAGA transcription coactivator-HAT complexes.

It localises to the nucleus. It catalyses the reaction Thiol-dependent hydrolysis of ester, thioester, amide, peptide and isopeptide bonds formed by the C-terminal Gly of ubiquitin (a 76-residue protein attached to proteins as an intracellular targeting signal).. Functionally, histone deubiquitinating component of the transcription regulatory histone acetylation (HAT) complex SAGA. Catalyzes the deubiquitination of both histones H2A and H2B, thereby acting as a coactivator. Recruited to specific gene promoters by activators, where it is required for transcription. The polypeptide is Ubiquitin carboxyl-terminal hydrolase 22-A (usp22-a) (Xenopus laevis (African clawed frog)).